Here is a 122-residue protein sequence, read N- to C-terminus: MKPFLSIIFCFLVLGVDSQRWFQFMKEAGQGTRDMWRAYTDMREANWKNSDKYFHARGNYDAAQRGPGGAWAAKVISDAREGFKRMRGRGIEDSRADQFANEWGRSGKDPNFFRPPGLPSKY.

A signal peptide spans 1–18 (MKPFLSIIFCFLVLGVDS). Glutamine 19 carries the pyrrolidone carboxylic acid modification. Residues 100–122 (ANEWGRSGKDPNFFRPPGLPSKY) form a disordered region.

This sequence belongs to the SAA family. Apolipoprotein of the HDL complex. Expressed by the liver; secreted in plasma.

Its subcellular location is the secreted. Major acute phase reactant. This is Serum amyloid A-2 protein (SAA2) from Mesocricetus auratus (Golden hamster).